Consider the following 357-residue polypeptide: 3-isopropylmalate dehydrogenase (357 aa).

Position 75–88 (75–88 (GPKWDTLPPAERPE)) interacts with NAD(+). Substrate is bound by residues arginine 96, arginine 106, arginine 134, and aspartate 222. Residues aspartate 222, aspartate 246, and aspartate 250 each coordinate Mg(2+). Residue 279 to 291 (GSAPDIAGQQKAN) coordinates NAD(+).

This sequence belongs to the isocitrate and isopropylmalate dehydrogenases family. LeuB type 1 subfamily. Homodimer. Mg(2+) is required as a cofactor. The cofactor is Mn(2+).

The protein localises to the cytoplasm. It carries out the reaction (2R,3S)-3-isopropylmalate + NAD(+) = 4-methyl-2-oxopentanoate + CO2 + NADH. It functions in the pathway amino-acid biosynthesis; L-leucine biosynthesis; L-leucine from 3-methyl-2-oxobutanoate: step 3/4. Catalyzes the oxidation of 3-carboxy-2-hydroxy-4-methylpentanoate (3-isopropylmalate) to 3-carboxy-4-methyl-2-oxopentanoate. The product decarboxylates to 4-methyl-2 oxopentanoate. The protein is 3-isopropylmalate dehydrogenase of Moorella thermoacetica (strain ATCC 39073 / JCM 9320).